The following is a 486-amino-acid chain: Amyloid-beta A4 precursor protein-binding family B member 3 (486 aa).

Positions 29 to 61 (TGLPPGWRKIRDAAGTYYWHVPSGSTQWQRPTW) constitute a WW domain. PID domains lie at 113 to 280 (EPGA…QVEL) and 285 to 440 (SQAA…RTSS). The tract at residues 438 to 460 (TSSMDSPGGPLPPPLLKGGAGGA) is disordered.

As to quaternary structure, interacts with APP (via intracellular domain). Interacts with APLP1 and APLP2 (via intracellular domain).

Its subcellular location is the cytoplasm. It localises to the nucleus. Its function is as follows. May modulate the internalization of amyloid-beta precursor protein. In Mus musculus (Mouse), this protein is Amyloid-beta A4 precursor protein-binding family B member 3.